The primary structure comprises 300 residues: Rhodopsin (300 aa).

Residues 1–18 (LHMIHLHWYQYPPMNPMM) lie on the Extracellular side of the membrane. A helical membrane pass occupies residues 19–43 (YPLLLVFMLITGILCLAGNFVTIWV). The Cytoplasmic portion of the chain corresponds to 44–55 (FMNTKSLRTPAN). Residues 56 to 78 (LLVVNLAMSDFLMMFTMFPPMMV) traverse the membrane as a helical segment. Topologically, residues 79-92 (TCYYHTWTLGATFC) are extracellular. Cys92 and Cys168 are disulfide-bonded. Residues 93 to 115 (QVYAFLGNLCGCASIWTMVFITF) traverse the membrane as a helical segment. The 'Ionic lock' involved in activated form stabilization motif lies at 116–118 (DRY). Residues 116-134 (DRYNVIVKGVAGEPLSTKK) are Cytoplasmic-facing. Residues 135–155 (ASLWILTIWILSITWCIAPFF) traverse the membrane as a helical segment. The Extracellular portion of the chain corresponds to 156-181 (GWNRYVPEGNTGCGTDYLSEDILSRS). Residues 182–203 (YLYIYSTWVYFLPLAITIYCHV) form a helical membrane-spanning segment. Topologically, residues 204-244 (FIIKAVAAHEKGMRDQAKKMGIKSLRNEEAQKTSAECRLAK) are cytoplasmic. Residues 245–266 (IAMTTVALWFIAWTPYLLINWV) traverse the membrane as a helical segment. The Extracellular portion of the chain corresponds to 267-277 (GMFARSYLSPV). A helical transmembrane segment spans residues 278 to 299 (YTIWGYVFAKANAVYNPIVYAI). N6-(retinylidene)lysine is present on Lys287.

Belongs to the G-protein coupled receptor 1 family. Opsin subfamily. Homodimer. Interacts with GNAQ. In terms of processing, contains one covalently linked retinal chromophore.

Its subcellular location is the cell projection. It localises to the rhabdomere membrane. Functionally, photoreceptor required for image-forming vision at low light intensity. Can use both retinal and 3-dehydroretinal as visual pigment. Light-induced isomerization of 11-cis to all-trans retinal triggers a conformational change that activates signaling via G-proteins. Signaling via GNAQ probably mediates the activation of phospholipase C. The polypeptide is Rhodopsin (RHO) (Cambarus maculatus (Freckled crayfish)).